The following is a 191-amino-acid chain: Protein GrpE (191 aa).

This sequence belongs to the GrpE family. As to quaternary structure, homodimer.

The protein resides in the cytoplasm. Its function is as follows. Participates actively in the response to hyperosmotic and heat shock by preventing the aggregation of stress-denatured proteins, in association with DnaK and GrpE. It is the nucleotide exchange factor for DnaK and may function as a thermosensor. Unfolded proteins bind initially to DnaJ; upon interaction with the DnaJ-bound protein, DnaK hydrolyzes its bound ATP, resulting in the formation of a stable complex. GrpE releases ADP from DnaK; ATP binding to DnaK triggers the release of the substrate protein, thus completing the reaction cycle. Several rounds of ATP-dependent interactions between DnaJ, DnaK and GrpE are required for fully efficient folding. In Helicobacter pylori (strain P12), this protein is Protein GrpE.